A 404-amino-acid polypeptide reads, in one-letter code: Probable tRNA sulfurtransferase (404 aa).

The THUMP domain maps to 60–165 (RSVIEALKPV…DEAAYLSHED (106 aa)). Residues 183-184 (ML), 208-209 (HF), arginine 265, glycine 287, and glutamine 296 each bind ATP.

The protein belongs to the ThiI family.

It is found in the cytoplasm. The enzyme catalyses [ThiI sulfur-carrier protein]-S-sulfanyl-L-cysteine + a uridine in tRNA + 2 reduced [2Fe-2S]-[ferredoxin] + ATP + H(+) = [ThiI sulfur-carrier protein]-L-cysteine + a 4-thiouridine in tRNA + 2 oxidized [2Fe-2S]-[ferredoxin] + AMP + diphosphate. It catalyses the reaction [ThiS sulfur-carrier protein]-C-terminal Gly-Gly-AMP + S-sulfanyl-L-cysteinyl-[cysteine desulfurase] + AH2 = [ThiS sulfur-carrier protein]-C-terminal-Gly-aminoethanethioate + L-cysteinyl-[cysteine desulfurase] + A + AMP + 2 H(+). Its pathway is cofactor biosynthesis; thiamine diphosphate biosynthesis. Functionally, catalyzes the ATP-dependent transfer of a sulfur to tRNA to produce 4-thiouridine in position 8 of tRNAs, which functions as a near-UV photosensor. Also catalyzes the transfer of sulfur to the sulfur carrier protein ThiS, forming ThiS-thiocarboxylate. This is a step in the synthesis of thiazole, in the thiamine biosynthesis pathway. The sulfur is donated as persulfide by IscS. The polypeptide is Probable tRNA sulfurtransferase (Streptococcus equi subsp. zooepidemicus (strain H70)).